Here is a 384-residue protein sequence, read N- to C-terminus: Putative glycosyltransferase EpsF (384 aa).

It belongs to the glycosyltransferase group 1 family. Glycosyltransferase 4 subfamily.

Its function is as follows. May be involved in the production of the exopolysaccharide (EPS) component of the extracellular matrix during biofilm formation. EPS is responsible for the adhesion of chains of cells into bundles. Required for biofilm maintenance. In Bacillus subtilis (strain 168), this protein is Putative glycosyltransferase EpsF (epsF).